A 155-amino-acid chain; its full sequence is uncharacterized protein (155 aa).

The segment at 56–79 (GEKRPTHRRPYRRTKPYPKRPSML) is disordered. Residues 60 to 73 (PTHRRPYRRTKPYP) show a composition bias toward basic residues.

This is an uncharacterized protein from Sinorhizobium fredii (strain NBRC 101917 / NGR234).